The following is a 150-amino-acid chain: Large ribosomal subunit protein bL9 (150 aa).

Belongs to the bacterial ribosomal protein bL9 family.

Functionally, binds to the 23S rRNA. In Lactococcus lactis subsp. cremoris (strain SK11), this protein is Large ribosomal subunit protein bL9.